The primary structure comprises 179 residues: Shikimate kinase (179 aa).

15–20 (GAGKTS) contacts ATP. Mg(2+) is bound at residue T19. Substrate contacts are provided by D37, R61, and G83. R122 contributes to the ATP binding site. R142 contributes to the substrate binding site.

It belongs to the shikimate kinase family. Monomer. The cofactor is Mg(2+).

The protein localises to the cytoplasm. The catalysed reaction is shikimate + ATP = 3-phosphoshikimate + ADP + H(+). The protein operates within metabolic intermediate biosynthesis; chorismate biosynthesis; chorismate from D-erythrose 4-phosphate and phosphoenolpyruvate: step 5/7. Its function is as follows. Catalyzes the specific phosphorylation of the 3-hydroxyl group of shikimic acid using ATP as a cosubstrate. The chain is Shikimate kinase from Coxiella burnetii (strain Dugway 5J108-111).